The primary structure comprises 474 residues: Type I restriction enzyme EcoBI specificity subunit (474 aa).

This sequence belongs to the type-I restriction system S methylase family. In terms of assembly, the type I restriction/modification system is composed of three polypeptides R, M and S. The restriction enzyme has stoichiometry R(2)M(2)S(1) while the methyltransferase is M(2)S(1).

In terms of biological role, the specificity (S) subunit of a type I restriction enzyme; this subunit dictates DNA sequence specificity. The M and S subunits together form a methyltransferase (MTase) that methylates A-3 on the top strand and A-4 on the bottom strand of the sequence 5'-TGAN(8)TGCT-3'. In the presence of the R subunit the complex can also act as an endonuclease, binding to the same target sequence but cutting the DNA some distance from this site. Whether the DNA is cut or modified depends on the methylation state of the target sequence. When the target site is unmodified, the DNA is cut. When the target site is hemimethylated, the complex acts as a maintenance MTase modifying the DNA so that both strands become methylated. After locating a non-methylated recognition site, the enzyme complex serves as a molecular motor that translocates DNA in an ATP-dependent manner until a collision occurs that triggers cleavage. This chain is Type I restriction enzyme EcoBI specificity subunit, found in Escherichia coli.